The sequence spans 337 residues: Na(+)/H(+) exchange regulatory cofactor NHE-RF2 (337 aa).

Residues 11-91 (LCRLVRGEQG…QTQLLVVDKE (81 aa)) enclose the PDZ 1 domain. Positions 112 to 145 (LPPAHNPWEPKPDWACSGSLGSDTGQKDVNGPPR) are disordered. Serine 130, serine 183, serine 186, serine 254, serine 269, serine 280, and serine 303 each carry phosphoserine. The PDZ 2 domain maps to 151–231 (LCHLRRGPQG…EARLLVVDPE (81 aa)). The segment at 242 to 337 (VPTEEHVEGP…NRKREIFSNF (96 aa)) is disordered. Positions 255 to 275 (PVTNGTSPAQLNGGSVCSSRS) are enriched in polar residues. A compositionally biased stretch (basic and acidic residues) spans 327–337 (WNRKREIFSNF).

Homodimer, and heterodimer with NHERF1. Binds PDZK1. Interacts with SRY. Binds ADRB2, SLC9A3, P2RY1, P2YR2, RDX and LPAR2. Interacts with MCC. Found in a complex with EZR, PODXL and NHERF2. Interacts (via the PDZ domains) with PODXL (via the C-terminal PDZ-binding motif DTHL); interaction is detected in glomerular epithelium cells. Interacts with SGK1 and KCNJ1/ROMK1. Interacts (via the PDZ domains) with SLC26A6.

Its subcellular location is the endomembrane system. It is found in the nucleus. The protein resides in the apical cell membrane. Functionally, scaffold protein that connects plasma membrane proteins with members of the ezrin/moesin/radixin family and thereby helps to link them to the actin cytoskeleton and to regulate their surface expression. Necessary for cAMP-mediated phosphorylation and inhibition of SLC9A3. May also act as scaffold protein in the nucleus. The polypeptide is Na(+)/H(+) exchange regulatory cofactor NHE-RF2 (Nherf2) (Mus musculus (Mouse)).